The primary structure comprises 504 residues: L-carnitine/gamma-butyrobetaine antiporter (504 aa).

Helical transmembrane passes span 8-28 (AGIE…LCWL), 51-71 (WGWA…WLVF), 92-112 (IFMM…SIEI), 143-163 (GPLP…FFFV), 195-215 (FYLV…TPLV), 231-251 (LDAI…AFGL), 263-283 (TYLS…SFIV), 315-335 (AWTV…SIFL), 347-367 (LCLG…TYSG), 403-423 (LSTA…VTLI), 446-466 (LLVR…LLAL), and 475-495 (AIIA…LSFI).

The protein belongs to the BCCT transporter (TC 2.A.15) family. CaiT subfamily. Homotrimer.

The protein resides in the cell inner membrane. It catalyses the reaction 4-(trimethylamino)butanoate(in) + (R)-carnitine(out) = 4-(trimethylamino)butanoate(out) + (R)-carnitine(in). The protein operates within amine and polyamine metabolism; carnitine metabolism. Its function is as follows. Catalyzes the exchange of L-carnitine for gamma-butyrobetaine. The chain is L-carnitine/gamma-butyrobetaine antiporter from Proteus sp. (strain LE138).